Consider the following 598-residue polypeptide: MAMLSTASVSGSVDLPRGTMKVDSSASPEVVSDLPPSSPKGSPDRHDPSTSSPSPSRGGDNQSEVISKSEEYRQLFRLPADEILVQDFNCACQESILMQGHMYLFIHYICFYSNIFGYETKKIIPFAEISCVKRAKTAGIFPNAIEILAGGKKYFFASFLSRDEAFKLIHDGWLEYGSAVKSEGEILVTEPQVSDGVVKRARSSMDLANELDIPVRDETLHLSSSSSLPVISQNGVPPSSVQRHAEPDVDVVAANTFNWKPEDTDAPKLSSDFTKVAEAKFSIPVEEFFRLFFSDGAVSFVESFHKNCGDKEFRCTSWQPHEKLGHTRNVSFQHPIKIYFGAKFGGCQESQKFRMYRNSHLVIETSQEISDVPYADYFTVEGVWDLKRDCRDSVEGCILDVYVNVAFSKRTVWKGKIVQSTLEECREAYAHWIRMAHELLKQKKLENQEGNKLIEDGEPLAAREERVSECDEEGKVEMVGEGVVKKSLKEAWVNLTSFVKRQSGTRQVIVLAFAVILLMQVTIVVLLKKGGGGQVEYHERYDEYSVNGETLGWLEKRMHFLREEMMMVEDRLQRMRQDHAALKAQFHHLERLLRRNKQ.

Positions 1-11 (MAMLSTASVSG) are enriched in polar residues. A disordered region spans residues 1 to 64 (MAMLSTASVS…PSRGGDNQSE (64 aa)). Residues 1–68 (MAMLSTASVS…GDNQSEVISK (68 aa)) constitute a chloroplast transit peptide. Asparagine 61 carries N-linked (GlcNAc...) asparagine glycosylation. The GRAM domain occupies 70–134 (EEYRQLFRLP…PFAEISCVKR (65 aa)). The VASt domain maps to 272-444 (DFTKVAEAKF…MAHELLKQKK (173 aa)). Residues asparagine 329 and asparagine 494 are each glycosylated (N-linked (GlcNAc...) asparagine). The chain crosses the membrane as a helical span at residues 507 to 527 (QVIVLAFAVILLMQVTIVVLL). Positions 553–595 (WLEKRMHFLREEMMMVEDRLQRMRQDHAALKAQFHHLERLLRR) form a coiled coil.

The protein resides in the membrane. It is found in the plastid. It localises to the chloroplast. In terms of biological role, involved in ethylene- and salicylic acid-dependent cell death control associated with cells in the vicinity of vascular bundles. This chain is Protein VASCULAR ASSOCIATED DEATH 1, chloroplastic, found in Arabidopsis thaliana (Mouse-ear cress).